Here is a 445-residue protein sequence, read N- to C-terminus: Arabinooligosaccharide-binding protein (445 aa).

An N-terminal signal peptide occupies residues 1–20 (MGKNILFFSFVGVMVLVLVA). The N-palmitoyl cysteine moiety is linked to residue cysteine 21. Cysteine 21 is lipidated: S-diacylglycerol cysteine.

Belongs to the bacterial solute-binding protein 1 family. In terms of assembly, the complex is composed of two ATP-binding proteins (MsmX), two transmembrane proteins (AraP and AraQ) and a solute-binding protein (AraN).

The protein localises to the cell membrane. Part of the ABC transporter complex AraNPQ involved in the uptake of arabinooligosaccharides. AraN captures the substrate and delivers it to the two transmembrane components. The chain is Arabinooligosaccharide-binding protein (araN) from Halalkalibacterium halodurans (strain ATCC BAA-125 / DSM 18197 / FERM 7344 / JCM 9153 / C-125) (Bacillus halodurans).